The sequence spans 163 residues: uncharacterized protein (163 aa).

This is an uncharacterized protein from Rickettsia conorii (strain ATCC VR-613 / Malish 7).